Consider the following 57-residue polypeptide: Aminopeptidase A (57 aa).

Topologically, residues 1 to 57 (YLTDHYFKVDLNSTVTQQRFLLDPSELAGITIMQPSDSNIEWLKQYRDDVATWLENS) are extracellular. N12 carries N-linked (GlcNAc...) asparagine glycosylation.

This sequence belongs to the peptidase M1 family. As to quaternary structure, homodimer; disulfide-linked. It depends on Zn(2+) as a cofactor.

The protein resides in the cell membrane. The catalysed reaction is Release of N-terminal glutamate (and to a lesser extent aspartate) from a peptide.. Its activity is regulated as follows. Inhibited by the aminopeptidase competitive inhibitors amastatin (Leu and acidic inhibitor), and bestatin (Leu inhibitor), by chelating agents EDTA, and 1,10-Phenanthroline, as well as by Zn(2+) ions. Substrate specificity is modulated by Ca(2+), Ba(2+), and Mn(2+) ions which enhances the enzymatic activity for cleavage of acidic residues. Its function is as follows. Venom protein that cleaves N-terminal acidic residues from peptides with high potency in presence of calcium. It may have several roles in venom including alteration of blood pressure by cleaving circulating angiotensin-2, general degradation of host tissue, increase of permeability to other venom components, and/or processing of other toxins in the venom. The sequence is that of Aminopeptidase A from Gloydius blomhoffii (Mamushi).